The chain runs to 179 residues: Large ribosomal subunit protein uL5 (179 aa).

This sequence belongs to the universal ribosomal protein uL5 family. Part of the 50S ribosomal subunit; part of the 5S rRNA/L5/L18/L25 subcomplex. Contacts the 5S rRNA and the P site tRNA. Forms a bridge to the 30S subunit in the 70S ribosome.

Its function is as follows. This is one of the proteins that bind and probably mediate the attachment of the 5S RNA into the large ribosomal subunit, where it forms part of the central protuberance. In the 70S ribosome it contacts protein S13 of the 30S subunit (bridge B1b), connecting the 2 subunits; this bridge is implicated in subunit movement. Contacts the P site tRNA; the 5S rRNA and some of its associated proteins might help stabilize positioning of ribosome-bound tRNAs. The chain is Large ribosomal subunit protein uL5 from Mannheimia succiniciproducens (strain KCTC 0769BP / MBEL55E).